A 405-amino-acid chain; its full sequence is Methylamine dehydrogenase heavy chain (405 aa).

The N-terminal stretch at 1–36 (MTTFDHPSMIRQPKPTGLAGGLVLAALMLSSSLALA) is a signal peptide.

The protein belongs to the aromatic amine dehydrogenase heavy chain family. Tetramer of two light and two heavy chains.

It is found in the periplasm. The enzyme catalyses 2 oxidized [amicyanin] + methylamine + H2O = 2 reduced [amicyanin] + formaldehyde + NH4(+) + 2 H(+). Methylamine dehydrogenase carries out the oxidation of methylamine. Electrons are passed from methylamine dehydrogenase to amicyanin. The chain is Methylamine dehydrogenase heavy chain (mauB) from Methylophilus methylotrophus (Bacterium W3A1).